Consider the following 530-residue polypeptide: T-complex protein 1 subunit zeta-2 (530 aa).

Belongs to the TCP-1 chaperonin family. Component of the chaperonin-containing T-complex (TRiC), a heterooligomeric complex of about 850 to 900 kDa that forms two stacked rings, 12 to 16 nm in diameter. Testis-specific.

The protein resides in the cytoplasm. In terms of biological role, component of the chaperonin-containing T-complex (TRiC), a molecular chaperone complex that assists the folding of proteins upon ATP hydrolysis. This is T-complex protein 1 subunit zeta-2 (CCT6B) from Homo sapiens (Human).